The sequence spans 491 residues: Beta-galactosidase (491 aa).

E209 acts as the Proton donor in catalysis. E389 serves as the catalytic Nucleophile.

This sequence belongs to the glycosyl hydrolase 1 family.

The enzyme catalyses Hydrolysis of terminal non-reducing beta-D-galactose residues in beta-D-galactosides.. The protein is Beta-galactosidase (bgaS) of Sulfolobus acidocaldarius (strain ATCC 33909 / DSM 639 / JCM 8929 / NBRC 15157 / NCIMB 11770).